The chain runs to 107 residues: UPF0145 protein BVU_2335 (107 aa).

The protein belongs to the UPF0145 family.

The sequence is that of UPF0145 protein BVU_2335 from Phocaeicola vulgatus (strain ATCC 8482 / DSM 1447 / JCM 5826 / CCUG 4940 / NBRC 14291 / NCTC 11154) (Bacteroides vulgatus).